Here is a 197-residue protein sequence, read N- to C-terminus: Beta-crystallin A2 (197 aa).

The N-terminal arm stretch occupies residues 1 to 11 (MSGTLSQGSSP). 2 Beta/gamma crystallin 'Greek key' domains span residues 12–52 (ARLT…KVES) and 53–99 (GAWV…RPLL). The tract at residues 100–105 (CANHSD) is connecting peptide. 2 consecutive Beta/gamma crystallin 'Greek key' domains span residues 106 to 147 (SRVT…KVTS) and 148 to 196 (GAWV…RRVQ).

The protein belongs to the beta/gamma-crystallin family. In terms of assembly, homo/heterodimer, or complexes of higher-order. The structure of beta-crystallin oligomers seems to be stabilized through interactions between the N-terminal arms.

Its function is as follows. Crystallins are the dominant structural components of the vertebrate eye lens. In Macropus fuliginosus (Western gray kangaroo), this protein is Beta-crystallin A2 (CRYBA2).